The primary structure comprises 334 residues: Probable tRNA pseudouridine synthase B (334 aa).

Aspartate 82 (nucleophile) is an active-site residue. The PUA domain occupies 250-325 (LPKVWIRDSA…IAVDVDKVFM (76 aa)).

The protein belongs to the pseudouridine synthase TruB family. Type 2 subfamily.

It catalyses the reaction uridine(55) in tRNA = pseudouridine(55) in tRNA. Its function is as follows. Could be responsible for synthesis of pseudouridine from uracil-55 in the psi GC loop of transfer RNAs. This is Probable tRNA pseudouridine synthase B from Thermococcus gammatolerans (strain DSM 15229 / JCM 11827 / EJ3).